Here is a 285-residue protein sequence, read N- to C-terminus: Aspartate/glutamate leucyltransferase (285 aa).

Belongs to the R-transferase family. Bpt subfamily.

The protein resides in the cytoplasm. The enzyme catalyses N-terminal L-glutamyl-[protein] + L-leucyl-tRNA(Leu) = N-terminal L-leucyl-L-glutamyl-[protein] + tRNA(Leu) + H(+). The catalysed reaction is N-terminal L-aspartyl-[protein] + L-leucyl-tRNA(Leu) = N-terminal L-leucyl-L-aspartyl-[protein] + tRNA(Leu) + H(+). Functionally, functions in the N-end rule pathway of protein degradation where it conjugates Leu from its aminoacyl-tRNA to the N-termini of proteins containing an N-terminal aspartate or glutamate. The chain is Aspartate/glutamate leucyltransferase from Dinoroseobacter shibae (strain DSM 16493 / NCIMB 14021 / DFL 12).